The primary structure comprises 225 residues: Deoxyribose-phosphate aldolase (225 aa).

Asp-94 (proton donor/acceptor) is an active-site residue. Lys-158 (schiff-base intermediate with acetaldehyde) is an active-site residue. Catalysis depends on Lys-187, which acts as the Proton donor/acceptor.

Belongs to the DeoC/FbaB aldolase family. DeoC type 1 subfamily.

The protein localises to the cytoplasm. The catalysed reaction is 2-deoxy-D-ribose 5-phosphate = D-glyceraldehyde 3-phosphate + acetaldehyde. Its pathway is carbohydrate degradation; 2-deoxy-D-ribose 1-phosphate degradation; D-glyceraldehyde 3-phosphate and acetaldehyde from 2-deoxy-alpha-D-ribose 1-phosphate: step 2/2. In terms of biological role, catalyzes a reversible aldol reaction between acetaldehyde and D-glyceraldehyde 3-phosphate to generate 2-deoxy-D-ribose 5-phosphate. The polypeptide is Deoxyribose-phosphate aldolase (Thermococcus gammatolerans (strain DSM 15229 / JCM 11827 / EJ3)).